A 533-amino-acid chain; its full sequence is Probable dolichyl pyrophosphate Man9GlcNAc2 alpha-1,3-glucosyltransferase (533 aa).

The tract at residues 1 to 20 is disordered; sequence MPKKKPAKHSGEDDITIPVS. Transmembrane regions (helical) follow at residues 42–64, 149–169, 184–204, 214–234, 264–284, 360–380, 422–442, 463–483, and 491–511; these read FLCI…YSGA, WTVL…FVLV, WHIA…GHFQ, VGAI…LFSL, ILSV…FWWP, GFLY…FQVH, LLIP…SPGN, VFLL…YLTI, and FLFE…FAFY.

Belongs to the ALG6/ALG8 glucosyltransferase family.

It localises to the endoplasmic reticulum membrane. The catalysed reaction is an alpha-D-Man-(1-&gt;2)-alpha-D-Man-(1-&gt;2)-alpha-D-Man-(1-&gt;3)-[alpha-D-Man-(1-&gt;2)-alpha-D-Man-(1-&gt;3)-[alpha-D-Man-(1-&gt;2)-alpha-D-Man-(1-&gt;6)]-alpha-D-Man-(1-&gt;6)]-beta-D-Man-(1-&gt;4)-beta-D-GlcNAc-(1-&gt;4)-alpha-D-GlcNAc-diphospho-di-trans,poly-cis-dolichol + a di-trans,poly-cis-dolichyl beta-D-glucosyl phosphate = an alpha-D-Glc-(1-&gt;3)-alpha-D-Man-(1-&gt;2)-alpha-D-Man-(1-&gt;2)-alpha-D-Man-(1-&gt;3)-[alpha-D-Man-(1-&gt;2)-alpha-D-Man-(1-&gt;3)-[alpha-D-Man-(1-&gt;2)-alpha-D-Man-(1-&gt;6)]-alpha-D-Man-(1-&gt;6)]-beta-D-Man-(1-&gt;4)-beta-D-GlcNAc-(1-&gt;4)-alpha-D-GlcNAc-diphospho-di-trans,poly-cis-dolichol + a di-trans,poly-cis-dolichyl phosphate + H(+). Its pathway is protein modification; protein glycosylation. Functionally, adds the first glucose residue to the lipid-linked oligosaccharide precursor for N-linked glycosylation. Transfers glucose from dolichyl phosphate glucose (Dol-P-Glc) onto the lipid-linked oligosaccharide Man(9)GlcNAc(2)-PP-Dol. The chain is Probable dolichyl pyrophosphate Man9GlcNAc2 alpha-1,3-glucosyltransferase from Arabidopsis thaliana (Mouse-ear cress).